Reading from the N-terminus, the 106-residue chain is Small ribosomal subunit protein uS10 (106 aa).

Belongs to the universal ribosomal protein uS10 family. Part of the 30S ribosomal subunit.

Functionally, involved in the binding of tRNA to the ribosomes. The protein is Small ribosomal subunit protein uS10 of Prochlorococcus marinus (strain MIT 9301).